Consider the following 72-residue polypeptide: Prokaryotic ubiquitin-like protein Pup (72 aa).

Residues Met-1 to Gln-10 show a composition bias toward gly residues. The segment at Met-1–Asp-45 is disordered. Positions Gln-10–Glu-60 form a coiled coil. The ARC ATPase binding stretch occupies residues Gln-28 to Phe-66. Over residues Leu-33–Asp-42 the composition is skewed to basic and acidic residues. Deamidated glutamine is present on Gln-72. An Isoglutamyl lysine isopeptide (Gln-Lys) (interchain with K-? in acceptor proteins) cross-link involves residue Gln-72.

Belongs to the prokaryotic ubiquitin-like protein family. As to quaternary structure, strongly interacts with the proteasome-associated ATPase ARC through a hydrophobic interface; the interacting region of Pup lies in its C-terminal half. There is one Pup binding site per ARC hexamer ring. Is modified by deamidation of its C-terminal glutamine to glutamate by the deamidase Dop, a prerequisite to the subsequent pupylation process.

It participates in protein degradation; proteasomal Pup-dependent pathway. In terms of biological role, protein modifier that is covalently attached to lysine residues of substrate proteins, thereby targeting them for proteasomal degradation. The tagging system is termed pupylation. The sequence is that of Prokaryotic ubiquitin-like protein Pup from Streptomyces griseus subsp. griseus (strain JCM 4626 / CBS 651.72 / NBRC 13350 / KCC S-0626 / ISP 5235).